A 49-amino-acid chain; its full sequence is uncharacterized protein (49 aa).

This sequence belongs to the metallo-dependent hydrolases superfamily. TatD-type hydrolase family. The cofactor is a divalent metal cation.

This is an uncharacterized protein from Geobacillus stearothermophilus (Bacillus stearothermophilus).